The sequence spans 157 residues: Protein Smg (157 aa).

It belongs to the Smg family.

The sequence is that of Protein Smg from Pectobacterium carotovorum subsp. carotovorum (strain PC1).